Here is a 565-residue protein sequence, read N- to C-terminus: Probable beta-glucosidase btgE (565 aa).

The first 18 residues, 1 to 18 (MRGAILATAAALAGTAMA), serve as a signal peptide directing secretion. A disordered region spans residues 246 to 304 (TGQDEPTSAPAAPSTTAVPATTTAAPETTTAAPDTTTAVPSTSSAAPSSSSTAPASTGA). Over residues 251-304 (PTSAPAAPSTTAVPATTTAAPETTTAAPDTTTAVPSTSSAAPSSSSTAPASTGA) the composition is skewed to low complexity. The active-site Proton donor is the glutamate 405. Residue glutamate 501 is the Nucleophile of the active site.

Belongs to the glycosyl hydrolase 17 family.

The protein resides in the secreted. It localises to the cell wall. The catalysed reaction is Hydrolysis of terminal, non-reducing beta-D-glucosyl residues with release of beta-D-glucose.. Its pathway is glycan metabolism; cellulose degradation. Beta-glucosidases are one of a number of cellulolytic enzymes involved in the degradation of cellulosic biomass. Catalyzes the last step releasing glucose from the inhibitory cellobiose. The protein is Probable beta-glucosidase btgE (btgE) of Aspergillus fumigatus (strain CBS 144.89 / FGSC A1163 / CEA10) (Neosartorya fumigata).